The primary structure comprises 524 residues: Alanine aminotransferase 2 (524 aa).

K342 carries the N6-(pyridoxal phosphate)lysine modification.

The protein belongs to the class-I pyridoxal-phosphate-dependent aminotransferase family. Alanine aminotransferase subfamily. As to quaternary structure, homodimer. Pyridoxal 5'-phosphate serves as cofactor.

The enzyme catalyses L-alanine + 2-oxoglutarate = pyruvate + L-glutamate. It participates in amino-acid degradation; L-alanine degradation via transaminase pathway; pyruvate from L-alanine: step 1/1. In terms of biological role, catalyzes the reversible transamination between alanine and 2-oxoglutarate to form pyruvate and glutamate. This is Alanine aminotransferase 2 (gpt2) from Xenopus tropicalis (Western clawed frog).